The following is a 233-amino-acid chain: Small ribosomal subunit protein uS3 (233 aa).

The KH type-2 domain maps to 39-107; sequence VRTFLTKELK…PAQINISEVR (69 aa).

It belongs to the universal ribosomal protein uS3 family. Part of the 30S ribosomal subunit. Forms a tight complex with proteins S10 and S14.

Its function is as follows. Binds the lower part of the 30S subunit head. Binds mRNA in the 70S ribosome, positioning it for translation. This Pseudoalteromonas translucida (strain TAC 125) protein is Small ribosomal subunit protein uS3.